We begin with the raw amino-acid sequence, 137 residues long: Cytochrome b5 (137 aa).

The Cytochrome b5 heme-binding domain occupies 6 to 82; it reads KKVYTLEEVA…MDEYYVGDID (77 aa). 2 residues coordinate heme: histidine 41 and histidine 65. Residues 108-128 traverse the membrane as a helical segment; the sequence is FIIKILQFLVPLAILGLAVAI.

Belongs to the cytochrome b5 family.

The protein resides in the endoplasmic reticulum membrane. It is found in the microsome membrane. Its function is as follows. Membrane bound hemoprotein which function as an electron carrier for several membrane bound oxygenases. This Oryza sativa subsp. japonica (Rice) protein is Cytochrome b5.